A 277-amino-acid chain; its full sequence is Large ribosomal subunit protein uL2 (277 aa).

2 disordered regions span residues 36 to 55 and 213 to 277; these read PLPK…RHHG and WKGI…RKKK.

The protein belongs to the universal ribosomal protein uL2 family. Part of the 50S ribosomal subunit. Forms a bridge to the 30S subunit in the 70S ribosome.

In terms of biological role, one of the primary rRNA binding proteins. Required for association of the 30S and 50S subunits to form the 70S ribosome, for tRNA binding and peptide bond formation. It has been suggested to have peptidyltransferase activity; this is somewhat controversial. Makes several contacts with the 16S rRNA in the 70S ribosome. The chain is Large ribosomal subunit protein uL2 from Staphylococcus saprophyticus subsp. saprophyticus (strain ATCC 15305 / DSM 20229 / NCIMB 8711 / NCTC 7292 / S-41).